The sequence spans 308 residues: Heme A synthase (308 aa).

Over 1-8 the chain is Cytoplasmic; it reads MFKKRNLK. The chain crosses the membrane as a helical span at residues 9–29; that stretch reads WLSILATVIMAWVQLGGALVT. At 30-67 the chain is on the extracellular side; the sequence is KTGSENGCGASWPLCHGALLPQNLPIATIIELSHRATS. An intrachain disulfide couples C37 to C44. The active site involves E60. Residue H63 coordinates heme o. A helical transmembrane segment spans residues 68 to 88; the sequence is ALSLIVVLWLVITAWKNIGYI. Residues 89–93 lie on the Cytoplasmic side of the membrane; sequence KEVKP. A helical transmembrane segment spans residues 94-114; that stretch reads LCIISVAFLLIQALVGAAAVL. The Extracellular segment spans residues 115 to 123; sequence WQQNDYVLA. Residues 124 to 144 form a helical membrane-spanning segment; it reads LHFGISLISFSSVFVLTLIIF. H125 contacts heme o. Topologically, residues 145–161 are cytoplasmic; it reads DVDQKYEANKVHIDRKL. Residues 162-182 form a helical membrane-spanning segment; the sequence is RIYTWTMAICLYVGIYTGALV. Residues 183 to 215 are Extracellular-facing; it reads RHTKSSLAYGSWPLPFNDLIPHTEQDWVQLAHR. H214 contributes to the heme b binding site. The chain crosses the membrane as a helical span at residues 216–236; sequence TLALIASISVFLAFNYAIKHY. Over 237-244 the chain is Cytoplasmic; sequence QNNRTIRY. The helical transmembrane segment at 245-265 threads the bilayer; it reads GYTAALLLIILQIVTGALSIF. Over 266-270 the chain is Extracellular; the sequence is THVNL. The chain crosses the membrane as a helical span at residues 271–291; the sequence is IIALLHALIITFEFGLIAYLI. Residue H276 participates in heme b binding. Residues 292–308 are Cytoplasmic-facing; it reads VLLLRSQRVEKVKQNAY.

Belongs to the COX15/CtaA family. Type 1 subfamily. As to quaternary structure, interacts with CtaB. Requires heme b as cofactor.

Its subcellular location is the cell membrane. The enzyme catalyses Fe(II)-heme o + 2 A + H2O = Fe(II)-heme a + 2 AH2. It functions in the pathway porphyrin-containing compound metabolism; heme A biosynthesis; heme A from heme O: step 1/1. Catalyzes the conversion of heme O to heme A by two successive hydroxylations of the methyl group at C8. The first hydroxylation forms heme I, the second hydroxylation results in an unstable dihydroxymethyl group, which spontaneously dehydrates, resulting in the formyl group of heme A. The chain is Heme A synthase from Staphylococcus carnosus (strain TM300).